A 701-amino-acid polypeptide reads, in one-letter code: MPDLLLELFSEEIPARMQAKAAEDLRRMVTDKLVAEGLVYEGAKAFATPRRLALTVHGIPARQADLKEERKGPRVGGPDAAIQGFLKATGLSSLEEATIQRDPKKGDFYVALIEKPGRATLDVLAEMLPVIVRTFPWPKSMRWGKRSEKPGALNWVRPLHAITATFGLETEEPDVVSFSVDGIEAGQTTYGHRFMAPAAISVRRFEDYEAKLLDAKVVLDPQRRKDTIVTDAKQLAFAQGYELVEDPVLLDEVSGLVEWPVVLMGSFDPEYLKVPAEVIRATIRNNQKCFVVRDPKTGGLAPKFILTANIEATDGGKTIIAGNERVIRARLSDAKFFYETDLKTRLEDRLPKFEQIVFHEKLGTQAARIARIEKLAAEIAPLVGADAAKTARAAKLAKADLLTEVVGEFPEVQGLMGKYYALAQGEDVSVAAACEEHYKPQGPGDRVPTDPVSVAVALADKLDTLVGFWAIDEKPTGSKDPYALRRAALGVIRLITENSLRLSLLQVAGSALAGLHVKSELDAGKLSADLLSFFADRLKVQLREQGARHDLVDAVFALGGQDDLLMVVRRVEALGKFLETDDGKNLLAGTKRASNILAIEEKKDKRKFDGAPDAALYRLDEEKALAKAIGEVGSEAGTAVAKEDFAAAMHAMAKLRPAVDAFFDKVKVNDDDAAIRENRLKLLNEIRNATRAVADFSKIEG.

This sequence belongs to the class-II aminoacyl-tRNA synthetase family. Tetramer of two alpha and two beta subunits.

The protein localises to the cytoplasm. It carries out the reaction tRNA(Gly) + glycine + ATP = glycyl-tRNA(Gly) + AMP + diphosphate. This chain is Glycine--tRNA ligase beta subunit, found in Bradyrhizobium sp. (strain BTAi1 / ATCC BAA-1182).